We begin with the raw amino-acid sequence, 468 residues long: Probable citrate synthase, mitochondrial (468 aa).

Active-site residues include histidine 303, histidine 349, and aspartate 404.

It belongs to the citrate synthase family. Homodimer.

Its subcellular location is the mitochondrion matrix. It catalyses the reaction oxaloacetate + acetyl-CoA + H2O = citrate + CoA + H(+). The protein operates within carbohydrate metabolism; tricarboxylic acid cycle; isocitrate from oxaloacetate: step 1/2. The protein is Probable citrate synthase, mitochondrial (cts-1) of Caenorhabditis elegans.